A 634-amino-acid polypeptide reads, in one-letter code: Probable potassium transport system protein Kup (634 aa).

The next 12 membrane-spanning stretches (helical) occupy residues 21–41 (LVIGAIGVVFGDIGTSPLYTL), 58–78 (VLGILSLVFWALMLVVTLKYV), 110–130 (MYVVGILGIFGASLFFGDGVI), 147–167 (APKLEPFVVPITLVVLSMLFL), 179–199 (AFGPITLLWFFALGAIGVYNM), 223–243 (WHAVFVLGAVVLAVTGGEALY), 258–278 (WQFVVLPMLTLTYLGQGALVL), 296–316 (ALYPMIVLATAATVIASQALI), 348–368 (IYVPAVNWCLLALVAVAVIGF), 377–397 (AYGVSVTGTMLITTVLMIIYA), 403–423 (VPAPLLWLFALVFLAVDCAFF), and 427–447 (IIKFLDGAWFPLLLGLILFTL).

This sequence belongs to the HAK/KUP transporter (TC 2.A.72) family.

It localises to the cell inner membrane. It carries out the reaction K(+)(in) + H(+)(in) = K(+)(out) + H(+)(out). Transport of potassium into the cell. Likely operates as a K(+):H(+) symporter. The chain is Probable potassium transport system protein Kup from Xanthomonas axonopodis pv. citri (strain 306).